A 226-amino-acid chain; its full sequence is Pathogenesis-related protein R minor form (226 aa).

Positions 1 to 25 are cleaved as a signal peptide; it reads MNFLKSFPFYAFLCFGQYFVAVTHA. 8 disulfide bridges follow: C34–C225, C75–C85, C90–C96, C140–C214, C145–C197, C153–C163, C167–C176, and C177–C184.

The protein belongs to the thaumatin family.

Its subcellular location is the vacuole. The protein is Pathogenesis-related protein R minor form of Nicotiana tabacum (Common tobacco).